Here is a 701-residue protein sequence, read N- to C-terminus: L-glutamate oxidase precursor (701 aa).

The signal sequence occupies residues 1 to 14 (MTTDTARRHTGAER). Positions 69, 88, 89, 97, 123, 124, 354, and 409 each coordinate FAD. The propeptide occupies 481 to 520 (LALPQSVRNLPTGLLGAHPSVDESRIGEEQVEYYRNSELR). Residues Glu-645, Trp-653, and Ile-654 each contribute to the FAD site. The propeptide occupies 684–701 (RRGAAAATEPMREEALTS).

The protein belongs to the flavin monoamine oxidase family. LGOX subfamily. The LGOX precursor forms homodimers. The mature enzyme is a heterohexamer composed of 2 alpha chains, 2 beta chains and 2 gamma chains (alpha2beta2gamma2). FAD is required as a cofactor. The precursor form is proteolytically cleaved by an endopeptidase into alpha, beta and gamma chains, which form the stable mature enzyme. Activation by proteolysis occurs after secretion.

It localises to the secreted. The enzyme catalyses L-glutamate + O2 + H2O = H2O2 + 2-oxoglutarate + NH4(+). Produced as a single polypeptide precursor and is activated by proteolytic cleavage. The LGOX precursor is an active enzyme, but it exhibits lower catalytic efficiency and lower thermostability compared with the mature hexameric LGOX. The mature form is strongly inhibited by p-chloromercuribenzoate, but not by CuCl(2), EDTA and diethyldithiocarbamate. Catalyzes the oxidative deamination of L-glutamate to 2-ketoglutarate along with the production of ammonia and hydrogen peroxide. Shows strict substrate specificity for L-glutamate, and exhibits only very weak activity with L-aspartate. In Streptomyces sp, this protein is L-glutamate oxidase precursor.